Reading from the N-terminus, the 501-residue chain is Glutamate--tRNA ligase (501 aa).

Positions 10–20 match the 'HIGH' region motif; sequence PSPTGSLHIGG. The 'KMSKS' region motif lies at 251–255; the sequence is KLSKR. Lys254 lines the ATP pocket.

The protein belongs to the class-I aminoacyl-tRNA synthetase family. Glutamate--tRNA ligase type 1 subfamily. Monomer.

The protein resides in the cytoplasm. The enzyme catalyses tRNA(Glu) + L-glutamate + ATP = L-glutamyl-tRNA(Glu) + AMP + diphosphate. Catalyzes the attachment of glutamate to tRNA(Glu) in a two-step reaction: glutamate is first activated by ATP to form Glu-AMP and then transferred to the acceptor end of tRNA(Glu). This is Glutamate--tRNA ligase from Desulforudis audaxviator (strain MP104C).